The following is a 294-amino-acid chain: GTPase Era (294 aa).

The region spanning 3–170 is the Era-type G domain; the sequence is KSGFISIIGR…LELMIKYMPE (168 aa). The tract at residues 11–18 is G1; the sequence is GRPNVGKS. 11–18 contacts GTP; sequence GRPNVGKS. The G2 stretch occupies residues 37-41; it reads QTTRN. The G3 stretch occupies residues 58 to 61; it reads DTPG. GTP is bound by residues 58–62 and 120–123; these read DTPGI and NKID. The interval 120–123 is G4; the sequence is NKID. The interval 149-151 is G5; sequence ISA. A KH type-2 domain is found at 201–278; it reads LSEEVPHGIA…NLKVWVKVKK (78 aa).

Belongs to the TRAFAC class TrmE-Era-EngA-EngB-Septin-like GTPase superfamily. Era GTPase family. In terms of assembly, monomer.

The protein localises to the cytoplasm. It localises to the cell membrane. Its function is as follows. An essential GTPase that binds both GDP and GTP, with rapid nucleotide exchange. Plays a role in 16S rRNA processing and 30S ribosomal subunit biogenesis and possibly also in cell cycle regulation and energy metabolism. The chain is GTPase Era from Clostridium novyi (strain NT).